Here is a 48-residue protein sequence, read N- to C-terminus: Large ribosomal subunit protein eL40 (48 aa).

The protein belongs to the eukaryotic ribosomal protein eL40 family.

The protein is Large ribosomal subunit protein eL40 of Methanoculleus marisnigri (strain ATCC 35101 / DSM 1498 / JR1).